We begin with the raw amino-acid sequence, 904 residues long: Protein translocase subunit SecA (904 aa).

Residues Q89, 107-111, and D496 each bind ATP; that span reads GEGKT. The interval 870-904 is disordered; sequence GGFQELSSGTPSPTVTVTTSSGGGTERKTSRRRKR. The span at 876 to 889 shows a compositional bias: low complexity; the sequence is SSGTPSPTVTVTTS.

This sequence belongs to the SecA family. As to quaternary structure, monomer and homodimer. Part of the essential Sec protein translocation apparatus which comprises SecA, SecYEG and auxiliary proteins SecDF. Other proteins may also be involved.

It localises to the cell inner membrane. The protein resides in the cytoplasm. The catalysed reaction is ATP + H2O + cellular proteinSide 1 = ADP + phosphate + cellular proteinSide 2.. Its function is as follows. Part of the Sec protein translocase complex. Interacts with the SecYEG preprotein conducting channel. Has a central role in coupling the hydrolysis of ATP to the transfer of proteins into and across the cell membrane, serving as an ATP-driven molecular motor driving the stepwise translocation of polypeptide chains across the membrane. In Leptospira borgpetersenii serovar Hardjo-bovis (strain L550), this protein is Protein translocase subunit SecA.